Here is a 264-residue protein sequence, read N- to C-terminus: MRVALGVEYNGARYSGWQRQSHVNSVQQEVETALSRICNHPVAIVCAGRTDAGVHGTGQVVHFDTDAPRDMVAFTLGMNTLLPKDIAIRFAQPVADDFHARFSATARRYRYVIYNNPLRGAVLNEGVTHFHHTLDETKMQEACQYLIGKYDFTSFRAIHCQANTAIRTIQHLSVQRQGSYVIIDIKANAFLHHMVRNITGCLMDIGLHKQQPVWLKELLDLKERAKASATAKAAGLYLVDVDYPEQFNIPKTPLGPLFLPDISI.

The active-site Nucleophile is Asp51. Tyr109 is a binding site for substrate.

Belongs to the tRNA pseudouridine synthase TruA family. Homodimer.

The enzyme catalyses uridine(38/39/40) in tRNA = pseudouridine(38/39/40) in tRNA. Functionally, formation of pseudouridine at positions 38, 39 and 40 in the anticodon stem and loop of transfer RNAs. The chain is tRNA pseudouridine synthase A from Pseudoalteromonas translucida (strain TAC 125).